We begin with the raw amino-acid sequence, 432 residues long: Trigger factor (432 aa).

The region spanning 163–248 (GDIAVIDFEG…LKALNKKELP (86 aa)) is the PPIase FKBP-type domain.

The protein belongs to the FKBP-type PPIase family. Tig subfamily.

Its subcellular location is the cytoplasm. The enzyme catalyses [protein]-peptidylproline (omega=180) = [protein]-peptidylproline (omega=0). Its function is as follows. Involved in protein export. Acts as a chaperone by maintaining the newly synthesized protein in an open conformation. Functions as a peptidyl-prolyl cis-trans isomerase. This Caldanaerobacter subterraneus subsp. tengcongensis (strain DSM 15242 / JCM 11007 / NBRC 100824 / MB4) (Thermoanaerobacter tengcongensis) protein is Trigger factor.